We begin with the raw amino-acid sequence, 389 residues long: S-adenosylmethionine synthase (389 aa).

His-16 is an ATP binding site. Asp-18 contacts Mg(2+). Glu-44 is a K(+) binding site. Residues Glu-57 and Gln-100 each contribute to the L-methionine site. The tract at residues 100 to 110 (QSPDIAQGVDE) is flexible loop. ATP is bound by residues 167 to 169 (DAK), 233 to 234 (RF), Asp-242, 248 to 249 (RK), Ala-265, and Lys-269. Position 242 (Asp-242) interacts with L-methionine. Residue Lys-273 coordinates L-methionine.

It belongs to the AdoMet synthase family. In terms of assembly, homotetramer; dimer of dimers. The cofactor is Mg(2+). K(+) is required as a cofactor.

It is found in the cytoplasm. It catalyses the reaction L-methionine + ATP + H2O = S-adenosyl-L-methionine + phosphate + diphosphate. The protein operates within amino-acid biosynthesis; S-adenosyl-L-methionine biosynthesis; S-adenosyl-L-methionine from L-methionine: step 1/1. Functionally, catalyzes the formation of S-adenosylmethionine (AdoMet) from methionine and ATP. The overall synthetic reaction is composed of two sequential steps, AdoMet formation and the subsequent tripolyphosphate hydrolysis which occurs prior to release of AdoMet from the enzyme. This chain is S-adenosylmethionine synthase, found in Acidithiobacillus ferrooxidans (strain ATCC 23270 / DSM 14882 / CIP 104768 / NCIMB 8455) (Ferrobacillus ferrooxidans (strain ATCC 23270)).